A 238-amino-acid polypeptide reads, in one-letter code: Lactate utilization protein A (238 aa).

This sequence belongs to the LutA/YkgE family.

Is involved in L-lactate degradation and allows cells to grow with lactate as the sole carbon source. In Anoxybacillus flavithermus (strain DSM 21510 / WK1), this protein is Lactate utilization protein A.